We begin with the raw amino-acid sequence, 751 residues long: Dual specificity tyrosine-phosphorylation-regulated kinase 1A (751 aa).

Positions 59 to 68 are enriched in polar residues; it reads YNDQIQQPLP. Disordered regions lie at residues 59-81 and 104-129; these read YNDQ…RDPA and YAKK…KVYN. The short motif at 109–126 is the Bipartite nuclear localization signal element; it reads RRHQQGQGDDSSHKKERK. The region spanning 151 to 471 is the Protein kinase domain; it reads YEIDSLIGKG…PYYALQHSFF (321 aa). ATP is bound by residues 157 to 165, Lys180, and 230 to 233; these read IGKGSFGQV and FEML. Asp279 (proton acceptor) is an active-site residue. Residues 477–493 are compositionally biased toward polar residues; it reads EGTNTSNSVSTSPAMEQ. Disordered regions lie at residues 477-532, 580-667, and 730-751; these read EGTN…HSGG, HVPS…GNQA, and GMDR…VASS. Residues 494 to 517 show a composition bias toward low complexity; it reads SQSSGTTSSTSSSSGGSSGTSNSG. A histidine-rich domain (HRD) region spans residues 585–613; sequence QQNVPHHHGNGSHHHHHHHHHHHGQHVLS. The span at 589-609 shows a compositional bias: basic residues; the sequence is PHHHGNGSHHHHHHHHHHHGQ. The segment covering 611–622 has biased composition (polar residues); that stretch reads VLSNRTRTRIYN. Low complexity-rich tracts occupy residues 623–633 and 642–660; these read SPSTSSSTQDS and SMTS…SSST. Polar residues predominate over residues 742 to 751; it reads CVQQSPVASS.

Belongs to the protein kinase superfamily. CMGC Ser/Thr protein kinase family. MNB/DYRK subfamily. Post-translationally, autophosphorylated on tyrosine residues.

The protein resides in the nucleus. It localises to the nucleus speckle. The enzyme catalyses L-seryl-[protein] + ATP = O-phospho-L-seryl-[protein] + ADP + H(+). It catalyses the reaction L-threonyl-[protein] + ATP = O-phospho-L-threonyl-[protein] + ADP + H(+). The catalysed reaction is L-tyrosyl-[protein] + ATP = O-phospho-L-tyrosyl-[protein] + ADP + H(+). It carries out the reaction [DNA-directed RNA polymerase] + ATP = phospho-[DNA-directed RNA polymerase] + ADP + H(+). Dual-specificity kinase which possesses both serine/threonine and tyrosine kinase activities. Exhibits a substrate preference for proline at position P+1 and arginine at position P-3. Plays an important role in double-strand breaks (DSBs) repair following DNA damage. Mechanistically, phosphorylates RNF169 and increases its ability to block accumulation of TP53BP1 at the DSB sites thereby promoting homologous recombination repair (HRR). Also acts as a positive regulator of transcription by acting as a CTD kinase that mediates phosphorylation of the CTD (C-terminal domain) of the large subunit of RNA polymerase II (RNAP II) POLR2A. Modulates alternative splicing by phosphorylating the splice factor SRSF6. Phosphorylates SEPTIN4, SEPTIN5 and SF3B1. In Xenopus tropicalis (Western clawed frog), this protein is Dual specificity tyrosine-phosphorylation-regulated kinase 1A.